A 338-amino-acid polypeptide reads, in one-letter code: tRNA N6-adenosine threonylcarbamoyltransferase (338 aa).

The Fe cation site is built by His-111 and His-115. Substrate-binding positions include Leu-134–Gly-138, Asp-167, Gly-180, and Asn-272. Asp-300 contributes to the Fe cation binding site.

The protein belongs to the KAE1 / TsaD family. The cofactor is Fe(2+).

It is found in the cytoplasm. It carries out the reaction L-threonylcarbamoyladenylate + adenosine(37) in tRNA = N(6)-L-threonylcarbamoyladenosine(37) in tRNA + AMP + H(+). Its function is as follows. Required for the formation of a threonylcarbamoyl group on adenosine at position 37 (t(6)A37) in tRNAs that read codons beginning with adenine. Is involved in the transfer of the threonylcarbamoyl moiety of threonylcarbamoyl-AMP (TC-AMP) to the N6 group of A37, together with TsaE and TsaB. TsaD likely plays a direct catalytic role in this reaction. In Nitrosomonas eutropha (strain DSM 101675 / C91 / Nm57), this protein is tRNA N6-adenosine threonylcarbamoyltransferase.